A 273-amino-acid polypeptide reads, in one-letter code: FALAQMVNDLEMVDEFVGKGANGLEIDVTFSSSGQPQYTYHGVPCDCFRSCKRREDFDTYIKYIRHLTTPGDPKFRSNLIMLIFDLKLNGLSQDALRKAGVEMADKLVGNYWQDLAEARAYIVLSMPSIEQSAFVTAFKDELKDFGYDKNLDRIGYDFSGNEDLDETAKVYKQLNINGHIWQADGITNRLPRGDSRLKEAISKRDTPGYQYINKVYTWTIDKASSIANALRLGVDGVMTNYPERVIDALNDSEFSGKFRLATYEDNPWETFKG.

2 residues coordinate Mg(2+): Glu25 and Asp27. His41 functions as the Nucleophile in the catalytic mechanism. An intrachain disulfide couples Cys45 to Cys51. Residue Asp85 participates in Mg(2+) binding.

This sequence belongs to the arthropod phospholipase D family. Class I subfamily. Mg(2+) serves as cofactor. In terms of tissue distribution, expressed by the venom gland.

Its subcellular location is the secreted. The catalysed reaction is an N-(acyl)-sphingosylphosphocholine = an N-(acyl)-sphingosyl-1,3-cyclic phosphate + choline. It catalyses the reaction an N-(acyl)-sphingosylphosphoethanolamine = an N-(acyl)-sphingosyl-1,3-cyclic phosphate + ethanolamine. The enzyme catalyses a 1-acyl-sn-glycero-3-phosphocholine = a 1-acyl-sn-glycero-2,3-cyclic phosphate + choline. It carries out the reaction a 1-acyl-sn-glycero-3-phosphoethanolamine = a 1-acyl-sn-glycero-2,3-cyclic phosphate + ethanolamine. Dermonecrotic toxins cleave the phosphodiester linkage between the phosphate and headgroup of certain phospholipids (sphingolipid and lysolipid substrates), forming an alcohol (often choline) and a cyclic phosphate. This toxin acts on sphingomyelin (SM). It may also act on ceramide phosphoethanolamine (CPE), lysophosphatidylcholine (LPC) and lysophosphatidylethanolamine (LPE), but not on lysophosphatidylserine (LPS), and lysophosphatidylglycerol (LPG). It acts by transphosphatidylation, releasing exclusively cyclic phosphate products as second products. Induces dermonecrosis, hemolysis, increased vascular permeability, edema, inflammatory response, and platelet aggregation. This Loxosceles spinulosa (Recluse spider) protein is Dermonecrotic toxin LspiSicTox-betaIE1i.